A 164-amino-acid chain; its full sequence is FMN reductase (NADH) RutF (164 aa).

Belongs to the non-flavoprotein flavin reductase family. RutF subfamily.

It carries out the reaction FMNH2 + NAD(+) = FMN + NADH + 2 H(+). In terms of biological role, catalyzes the reduction of FMN to FMNH2 which is used to reduce pyrimidine by RutA via the Rut pathway. The protein is FMN reductase (NADH) RutF of Escherichia coli O6:K15:H31 (strain 536 / UPEC).